The primary structure comprises 169 residues: ATP synthase subunit b (169 aa).

A helical transmembrane segment spans residues 14 to 34 (TFLAMLISFLILVFILQQVAF).

It belongs to the ATPase B chain family. As to quaternary structure, F-type ATPases have 2 components, F(1) - the catalytic core - and F(0) - the membrane proton channel. F(1) has five subunits: alpha(3), beta(3), gamma(1), delta(1), epsilon(1). F(0) has four main subunits: a(1), b(2) and c(10-14). The alpha and beta chains form an alternating ring which encloses part of the gamma chain. F(1) is attached to F(0) by a central stalk formed by the gamma and epsilon chains, while a peripheral stalk is formed by the delta and b chains.

Its subcellular location is the cell membrane. Its function is as follows. F(1)F(0) ATP synthase produces ATP from ADP in the presence of a proton or sodium gradient. F-type ATPases consist of two structural domains, F(1) containing the extramembraneous catalytic core and F(0) containing the membrane proton channel, linked together by a central stalk and a peripheral stalk. During catalysis, ATP synthesis in the catalytic domain of F(1) is coupled via a rotary mechanism of the central stalk subunits to proton translocation. Functionally, component of the F(0) channel, it forms part of the peripheral stalk, linking F(1) to F(0). In Heliobacterium modesticaldum (strain ATCC 51547 / Ice1), this protein is ATP synthase subunit b.